The following is a 202-amino-acid chain: Josephin-1 (202 aa).

Residues 1 to 22 (MSCVPWKGDKAKAESSDLPQAA) form a disordered region. Ser-15 carries the phosphoserine modification. Residues 23–202 (PPQIYHEKQR…EAHQSWRADV (180 aa)) form the Josephin domain. The active-site Nucleophile is the Cys-36. The Proton acceptor role is filled by His-139.

In terms of assembly, interacts with beta-actin/ACTB. In terms of processing, monoubiquitinated. Ubiquitination activates deubiquitination activity in vitro. Widely expressed (at protein level).

It is found in the cell membrane. The protein resides in the cytoplasm. The enzyme catalyses Thiol-dependent hydrolysis of ester, thioester, amide, peptide and isopeptide bonds formed by the C-terminal Gly of ubiquitin (a 76-residue protein attached to proteins as an intracellular targeting signal).. Deubiquitinates monoubiquitinated probes (in vitro). When ubiquitinated, cleaves 'Lys-63'-linked and 'Lys-48'-linked poly-ubiquitin chains (in vitro), hence may act as a deubiquitinating enzyme. May increase macropinocytosis and suppress clathrin- and caveolae-mediated endocytosis. May enhance membrane dynamics and cell motility independently of its catalytic activity. The protein is Josephin-1 (Josd1) of Mus musculus (Mouse).